Here is a 251-residue protein sequence, read N- to C-terminus: MASEQEKTADFGFRTVAKDEKEVMVAEVFHSVAAKYDLMNDLMSFGIHRIWKRFTIECSGVRRNQRVLDLAGGTGDLTAKFSRMVGEGGEVILADINASMLKVGREKLRNKGIIDNINYVQANAEALPFPDDFFDCITISFGLRNVTDKNKALRSMYRVLKPGGRLLVLEFSKPVIKQLSTIYDAYSFHILPRIGEAVASDAGSYRYLAESIRMHPDQETLKGMMSDAGFDSVNYFNLTGGIVALHRGFKF.

S-adenosyl-L-methionine contacts are provided by residues Thr74, Asp95, 123–124 (NA), and Ser140.

This sequence belongs to the class I-like SAM-binding methyltransferase superfamily. MenG/UbiE family.

It carries out the reaction a 2-demethylmenaquinol + S-adenosyl-L-methionine = a menaquinol + S-adenosyl-L-homocysteine + H(+). The enzyme catalyses a 2-methoxy-6-(all-trans-polyprenyl)benzene-1,4-diol + S-adenosyl-L-methionine = a 5-methoxy-2-methyl-3-(all-trans-polyprenyl)benzene-1,4-diol + S-adenosyl-L-homocysteine + H(+). It participates in quinol/quinone metabolism; menaquinone biosynthesis; menaquinol from 1,4-dihydroxy-2-naphthoate: step 2/2. Its pathway is cofactor biosynthesis; ubiquinone biosynthesis. Functionally, methyltransferase required for the conversion of demethylmenaquinol (DMKH2) to menaquinol (MKH2) and the conversion of 2-polyprenyl-6-methoxy-1,4-benzoquinol (DDMQH2) to 2-polyprenyl-3-methyl-6-methoxy-1,4-benzoquinol (DMQH2). This Pectobacterium atrosepticum (strain SCRI 1043 / ATCC BAA-672) (Erwinia carotovora subsp. atroseptica) protein is Ubiquinone/menaquinone biosynthesis C-methyltransferase UbiE.